A 490-amino-acid polypeptide reads, in one-letter code: Transmembrane protease serine 2 (490 aa).

Residues 1–83 (MALNSGSPPG…ALCTSKSKKS (83 aa)) lie on the Cytoplasmic side of the membrane. A helical; Signal-anchor for type II membrane protein transmembrane segment spans residues 84–104 (LCLALALGTVLTGAAVAAVLL). Over 105 to 490 (WRFWDSNCST…WIYQQMRANS (386 aa)) the chain is Extracellular. N-linked (GlcNAc...) asparagine glycosylation occurs at Asn111. Residues 111-149 (NCSTSEMECGSSGTCISSSLWCDGVAHCPNGEDENRCVR) enclose the LDL-receptor class A domain. 9 disulfides stabilise this stretch: Cys112-Cys125, Cys119-Cys138, Cys132-Cys147, Cys171-Cys230, Cys184-Cys240, Cys243-Cys363, Cys279-Cys295, Cys408-Cys424, and Cys435-Cys463. Residues Asp133, Val135, Asp143, and Glu144 each contribute to the Ca(2+) site. The SRCR domain occupies 150-242 (LYGQSFILQV…RMVVSLRCIE (93 aa)). The N-linked (GlcNAc...) asparagine glycan is linked to Asn212. In terms of domain architecture, Peptidase S1 spans 254–487 (IVGGLNASPG…FTDWIYQQMR (234 aa)). Catalysis depends on charge relay system residues His294 and Asp343. Ser439 serves as the catalytic Charge relay system. N-linked (GlcNAc...) asparagine glycosylation is present at Asn474.

The protein belongs to the peptidase S1 family. The catalytically active form interacts with ACE2. Post-translationally, proteolytically processed; by an autocatalytic mechanism. Autocleavage induces active conformation. As to expression, larynx, trachea and bronchi, lung, prostate and kidney.

It is found in the cell membrane. The protein localises to the secreted. It catalyses the reaction The enzyme cleaves angiotensin-converting enzyme 2 (EC 3.4.17.23) and cleaves influenzea A and B virus and coronavirus spike glycoproteins at arginine residues.. In terms of biological role, plasma membrane-anchored serine protease that cleaves at arginine residues. Participates in proteolytic cascades of relevance for the normal physiologic function of the prostate. Androgen-induced TMPRSS2 activates several substrates that include pro-hepatocyte growth factor/HGF, the protease activated receptor-2/F2RL1 or matriptase/ST14 leading to extracellular matrix disruption. In addition, activates trigeminal neurons and contribute to both spontaneous pain and mechanical allodynia. Its function is as follows. (Microbial infection) Essential for spread and pathogenesis of influenza A virus (strains H1N1, H3N2 and H7N9) and is involved in proteolytic cleavage and activation of hemagglutinin (HA) protein which is essential for viral infectivity. This chain is Transmembrane protease serine 2 (Tmprss2), found in Mus musculus (Mouse).